A 285-amino-acid polypeptide reads, in one-letter code: Aldo-keto reductase (285 aa).

An NADP(+)-binding site is contributed by 165–175 (APLAGGILTGK).

The protein belongs to the aldo/keto reductase family. Aldo/keto reductase 2 subfamily.

The polypeptide is Aldo-keto reductase (Babesia bovis).